The following is a 115-amino-acid chain: Immunoglobulin kappa variable 5-48 (115 aa).

Positions 1–20 (MVSTPQFLVFLLFWIPASRG) are cleaved as a signal peptide. A framework-1 region spans residues 21–43 (DILLTQSPAILSVSPGERVSFSC). The cysteines at positions 43 and 108 are disulfide-linked. The complementarity-determining-1 stretch occupies residues 44 to 54 (RASQSIGTSIH). The tract at residues 55-69 (WYQQRTNGSPRLLIK) is framework-2. The segment at 70-76 (YASESIS) is complementarity-determining-2. Positions 77–108 (GIPSRFSGSGSGTDFTLSINSVESEDIADYYC) are framework-3. A complementarity-determining-3 region spans residues 109 to 115 (QQSNSWP).

In Mus musculus (Mouse), this protein is Immunoglobulin kappa variable 5-48.